The primary structure comprises 172 residues: MQSQIVCHGCRNILLYPRGAPSVCCAVCHAVSSTAPSPGMDIAHLICGGCRTLLMYTRNATSVRCSCCDTVNLVRPVSSIAHLNCGQCQTVLMYPYGAPSVKCAICNFITNTGMNTMRHLPPNGTSYTAPSTSAPTTQSQNVTVVVENPMTVDAKGKLVSNVVVGVTTGGKK.

Putative zinc finger stretches follow at residues 4 to 34 (QIVCHGCRNILLYPRGAPSVCCAVCHAVSST), 44 to 74 (HLICGGCRTLLMYTRNATSVRCSCCDTVNLV), and 82 to 112 (HLNCGQCQTVLMYPYGAPSVKCAICNFITNT).

The protein resides in the nucleus. Functionally, putative zinc finger that may be involved in programmed cell death and defense response. The chain is Protein LOL2 (LOL2) from Oryza sativa subsp. japonica (Rice).